We begin with the raw amino-acid sequence, 509 residues long: Probable cytochrome P450 4ac3 (509 aa).

Cysteine 454 serves as a coordination point for heme.

The protein belongs to the cytochrome P450 family. Requires heme as cofactor.

It is found in the endoplasmic reticulum membrane. Its subcellular location is the microsome membrane. Functionally, may be involved in the metabolism of insect hormones and in the breakdown of synthetic insecticides. The sequence is that of Probable cytochrome P450 4ac3 (Cyp4ac3) from Drosophila melanogaster (Fruit fly).